The chain runs to 165 residues: Type IV major pilin protein PilE1 (165 aa).

The propeptide at 1 to 7 is leader sequence; the sequence is MNTLQKG. F8 is subject to N-methylphenylalanine. A helical transmembrane segment spans residues 8–28; the sequence is FTLIELMIVIAIVGILAAVAL. A glycan (O-linked (DADDGlc) serine) is linked at S70. S75 carries the O-(2-aminoethylphosphoryl)serine; alternate modification. The residue at position 75 (S75) is an O-(2-cholinephosphoryl)serine; alternate. S75 carries the post-translational modification Phosphoserine; alternate. O-(sn-1-glycerophosphoryl)serine; partial is present on S101. C128 and C158 are joined by a disulfide. Residues 137–153 show a composition bias toward basic and acidic residues; the sequence is DDTVADAKDGKEIDTKH. Residues 137–165 form a disordered region; it reads DDTVADAKDGKEIDTKHLPSTCRDNFDAK.

It belongs to the N-Me-Phe pilin family. As to quaternary structure, the pili are polar flexible filaments of about 5.4 nanometers diameter and 2.5 micrometers average length; they consist of only a single polypeptide chain arranged in a helical configuration of five subunits per turn in the assembled pilus. In terms of processing, the O-linked glycan identified as Gal-GlcNAc disaccharide in PubMed:7477282 and PubMed:10048019 is now identified as either a hexosyl-diacetamidotrideoxyhexoside (DATDHex) by mass spectrometry in PubMed:15249686, or alpha-D-galactopyranosyl-(1-&gt;3)-2,4-diacetamido-2,4-dideoxy-beta-D-glucopyranoside (DADDGlc) by X-ray diffraction in PubMed:16949362. It is not clear whether there is a chemical difference in the glycosylation of the two derivatives of strain MS11 used in these experiments, or not. In some MS11 derivative strains, Ser-75 is modified to O-(2-aminoethylphosphoryl)serine, and in some other derivatives that can be secondarily modified to O-(2-cholinephosphoryl)serine by N-methylation.

The protein localises to the fimbrium. It is found in the membrane. Functionally, major component of the type IV pilus (T4P) that plays a role in cellular adherence, microcolony formation, resistance to neutrophil mediated killing, twitching motility as well as transformation. Mediates the attachment and the formation of bacterial microcolonies on host epithelial cells. Mechanistically, pili retractation induces host NF-kappa-B activation in infected cells, which is temporally associated with the formation of gonococcal microcolonies. The chain is Type IV major pilin protein PilE1 (pilE1) from Neisseria gonorrhoeae.